Consider the following 358-residue polypeptide: Chorismate synthase (358 aa).

Arg-47 provides a ligand contact to NADP(+). Residues 124–126 (RSS), 240–241 (NA), Gly-284, 299–303 (KPVAT), and Arg-325 contribute to the FMN site.

This sequence belongs to the chorismate synthase family. As to quaternary structure, homotetramer. FMNH2 serves as cofactor.

It catalyses the reaction 5-O-(1-carboxyvinyl)-3-phosphoshikimate = chorismate + phosphate. It functions in the pathway metabolic intermediate biosynthesis; chorismate biosynthesis; chorismate from D-erythrose 4-phosphate and phosphoenolpyruvate: step 7/7. Functionally, catalyzes the anti-1,4-elimination of the C-3 phosphate and the C-6 proR hydrogen from 5-enolpyruvylshikimate-3-phosphate (EPSP) to yield chorismate, which is the branch point compound that serves as the starting substrate for the three terminal pathways of aromatic amino acid biosynthesis. This reaction introduces a second double bond into the aromatic ring system. In Bacteroides fragilis (strain YCH46), this protein is Chorismate synthase.